Here is a 31-residue protein sequence, read N- to C-terminus: Cytochrome b6-f complex subunit 6 (31 aa).

The helical transmembrane segment at 4–26 (LTSYFGFLLAALTITSALFIGLN) threads the bilayer.

This sequence belongs to the PetL family. The 4 large subunits of the cytochrome b6-f complex are cytochrome b6, subunit IV (17 kDa polypeptide, PetD), cytochrome f and the Rieske protein, while the 4 small subunits are PetG, PetL, PetM and PetN. The complex functions as a dimer.

The protein localises to the plastid. It localises to the chloroplast thylakoid membrane. Component of the cytochrome b6-f complex, which mediates electron transfer between photosystem II (PSII) and photosystem I (PSI), cyclic electron flow around PSI, and state transitions. PetL is important for photoautotrophic growth as well as for electron transfer efficiency and stability of the cytochrome b6-f complex. This chain is Cytochrome b6-f complex subunit 6, found in Blitum bonus-henricus (Good King Henry).